A 180-amino-acid polypeptide reads, in one-letter code: Inner membrane-spanning protein YciB (180 aa).

The next 5 membrane-spanning stretches (helical) occupy residues 25–45, 49–69, 76–96, 118–138, and 150–170; these read QNATLYMLITSVICITLCYVI, VSKLSIISTTVLLVSGSITLI, IKIKPTILYVIFGIIFLMSGI, IILSYRTAAFFFFMAVVNEIV, and FKVFGVIPVTFIFILLQLPLL.

Belongs to the YciB family.

It localises to the cell inner membrane. Functionally, plays a role in cell envelope biogenesis, maintenance of cell envelope integrity and membrane homeostasis. The polypeptide is Inner membrane-spanning protein YciB (Rickettsia felis (strain ATCC VR-1525 / URRWXCal2) (Rickettsia azadi)).